A 425-amino-acid chain; its full sequence is Histone-binding protein RBBP7 (425 aa).

An N-acetylalanine modification is found at Ala-2. At Ser-3 the chain carries Phosphoserine. The residue at position 4 (Lys-4) is an N6-acetyllysine; alternate. Residue Lys-4 forms a Glycyl lysine isopeptide (Lys-Gly) (interchain with G-Cter in SUMO2); alternate linkage. Residue Lys-4 forms a Glycyl lysine isopeptide (Lys-Gly) (interchain with G-Cter in ubiquitin); alternate linkage. At Thr-10 the chain carries Phosphothreonine. 2 positions are modified to phosphoserine: Glu-13 and Ser-95. WD repeat units follow at residues 47-122 (QWLP…KINH), 128-173 (RARY…LRLR), 181-217 (GLSW…KIVD), 228-269 (VVED…HLVD), 275-312 (VNCL…LHTF), 318-369 (EIFQ…LFIH), and 376-403 (ISDF…IWQM). Lys-101 is covalently cross-linked (Glycyl lysine isopeptide (Lys-Gly) (interchain with G-Cter in SUMO2)). The residue at position 119 (Lys-119) is an N6-acetyllysine. A Glycyl lysine isopeptide (Lys-Gly) (interchain with G-Cter in SUMO2) cross-link involves residue Lys-155. Lys-159 is subject to N6-acetyllysine; alternate. Lys-159 is covalently cross-linked (Glycyl lysine isopeptide (Lys-Gly) (interchain with G-Cter in SUMO2); alternate). Ser-354 carries the phosphoserine modification.

This sequence belongs to the WD repeat RBAP46/RBAP48/MSI1 family. In terms of assembly, binds directly to helix 1 of the histone fold of histone H4, a region that is not accessible when H4 is in chromatin. Subunit of the type B histone acetyltransferase (HAT) complex, composed of RBBP7 and HAT1. Subunit of the core histone deacetylase (HDAC) complex, which is composed of HDAC1, HDAC2, RBBP4 and RBBP7. The core HDAC complex associates with SIN3A, ARID4B/SAP180, SAP18, SAP30, SAP130, SUDS3/SAP45 and possibly ARID4A/RBP1 and ING1 to form the SIN3 HDAC complex. Component of the nucleosome remodeling and deacetylase (NuRD) repressor complex, composed of core proteins MTA1, MTA2, MTA3, RBBP4, RBBP7, HDAC1, HDAC2, MBD2, MBD3, and peripherally associated proteins CDK2AP1, CDK2AP2, GATAD2A, GATAD2B, CHD3, CHD4 and CHD5. The exact stoichiometry of the NuRD complex is unknown, and some subunits such as MBD2 and MBD3, GATAD2A and GATAD2B, and CHD3, CHD4 and CHD5 define mutually exclusive NuRD complexes. The NuRD complex may interact with MBD3L1. The NuRD complex may interact with MBD3L2. Subunit of the PRC2/EED-EZH2 complex, which is composed of at least EED, EZH2, RBBP4, RBBP7 and SUZ12. The PRC2/EED-EZH2 complex may also associate with HDAC1. Component of the NURF-1 ISWI chromatin remodeling complex (also called the nucleosome-remodeling factor (NURF) complex) at least composed of SMARCA1 (isoform 2), BPTF, RBBP4 and RBBP7. Within the complex interacts with isoform 2 of SMARCA1. Component of the BPFT-SMARCA1 complex at least composed of SMARCA1 (isoform 1), BPFT, RBBP4 and RBBP7; the complex is catalytically inactive and does not remodel chromatin. Within the complex interacts with isoform 1 of SMARCA1. Interacts with BRCA1. Interacts with CDK2AP1. Interacts with CENPA. Interacts with CHD3. Interacts with CHD4. Interacts with CREBBP, and this interaction may be enhanced by the binding of phosphorylated CREB1 to CREBBP. Interacts with HDAC7. Interacts with MTA1. Interacts with PWWP2B. Interacts with RB1 (via viral protein-binding domain). Interacts with SUV39H1.

Its subcellular location is the nucleus. Core histone-binding subunit that may target chromatin remodeling factors, histone acetyltransferases and histone deacetylases to their histone substrates in a manner that is regulated by nucleosomal DNA. Component of several complexes which regulate chromatin metabolism. These include the type B histone acetyltransferase (HAT) complex, which is required for chromatin assembly following DNA replication; the core histone deacetylase (HDAC) complex, which promotes histone deacetylation and consequent transcriptional repression; the nucleosome remodeling and histone deacetylase complex (the NuRD complex), which promotes transcriptional repression by histone deacetylation and nucleosome remodeling; and the PRC2/EED-EZH2 complex, which promotes repression of homeotic genes during development; and the NURF (nucleosome remodeling factor) complex. The chain is Histone-binding protein RBBP7 (RBBP7) from Homo sapiens (Human).